We begin with the raw amino-acid sequence, 371 residues long: Beta-1,3-galactosyltransferase 4 (371 aa).

Residues 1 to 4 (MPLS) lie on the Cytoplasmic side of the membrane. The chain crosses the membrane as a helical; Signal-anchor for type II membrane protein span at residues 5–25 (LFRRLLLAVLLLVIIWTLFGP). Over 26–371 (SGLGEELLSL…RCRFIAWLNS (346 aa)) the chain is Lumenal. Asparagine 143 carries an N-linked (GlcNAc...) asparagine glycan. The interval 187-208 (GGPSEQWQKGKEPQEETTAVHK) is disordered. Basic and acidic residues predominate over residues 194–207 (QKGKEPQEETTAVH).

Belongs to the glycosyltransferase 31 family. In terms of tissue distribution, highly expressed in thymus, spleen, kidney and testis and, to a lesser extent, in brain and liver.

It is found in the golgi apparatus membrane. It catalyses the reaction a ganglioside GM2 (d18:1(4E)) + UDP-alpha-D-galactose = a ganglioside GM1 (d18:1(4E)) + UDP + H(+). The enzyme catalyses a ganglioside GM2 + UDP-alpha-D-galactose = a ganglioside GM1 + UDP + H(+). The catalysed reaction is a ganglioside GD2 (d18:1(4E)) + UDP-alpha-D-galactose = a ganglioside GD1b (d18:1(4E)) + UDP + H(+). It carries out the reaction a ganglioside GA2 (d18:1(4E)) + UDP-alpha-D-galactose = a ganglioside GA1 (d18:1(4E)) + UDP + H(+). It functions in the pathway protein modification; protein glycosylation. Functionally, involved in GM1/GD1B/GA1 ganglioside biosynthesis. The chain is Beta-1,3-galactosyltransferase 4 (B3galt4) from Rattus norvegicus (Rat).